We begin with the raw amino-acid sequence, 80 residues long: MAKADIHPKWYPDAKVYCNGQVVMTIGSTKPELHVDVWSGNHPFYTGTQKIIDTEGRVERFLRKYGMSSTQTSGDEQTKK.

This sequence belongs to the bacterial ribosomal protein bL31 family. Type A subfamily. Part of the 50S ribosomal subunit.

Its function is as follows. Binds the 23S rRNA. In Nostoc punctiforme (strain ATCC 29133 / PCC 73102), this protein is Large ribosomal subunit protein bL31.